Consider the following 555-residue polypeptide: Transmembrane protein 87B (555 aa).

Residues 1-42 (MVAACRSVAGLLPRRRRCFPARAPLLRVALCLLCWTPAAVRA) form the signal peptide. The Lumenal portion of the chain corresponds to 43–214 (VPELGLWLET…PHGYISASDW (172 aa)). N-linked (GlcNAc...) asparagine glycans are attached at residues N68 and N197. A helical membrane pass occupies residues 215–235 (PLMIFYMVMCIVYILYGILWL). Residues 236-247 (TWSACYWKDILR) lie on the Cytoplasmic side of the membrane. The helical transmembrane segment at 248–268 (IQFWIAAVIFLGMLEKAVFYS) threads the bilayer. Topologically, residues 269-299 (EYQNISNTGLSTQGLLIFAELISAIKRTLAR) are lumenal. N-linked (GlcNAc...) asparagine glycosylation is present at N272. Residues 300–320 (LLVIIVSLGYGIVKPRLGTVM) form a helical membrane-spanning segment. The Cytoplasmic portion of the chain corresponds to 321–322 (HR). A helical membrane pass occupies residues 323 to 343 (VIGLGLLYLIFAAVEGVMRVI). Residues 344-350 (GGSNHLA) lie on the Lumenal side of the membrane. The chain crosses the membrane as a helical span at residues 351-371 (VVLDDIILAVIDSIFVWFIFI). Residues 372 to 396 (SLAQTMKTLRLRKNTVKFSLYRHFK) lie on the Cytoplasmic side of the membrane. Residues 397-417 (NTLIFAVLASIVFMGWTTKTF) traverse the membrane as a helical segment. Topologically, residues 418–429 (RIAKCQSDWMER) are lumenal. A helical transmembrane segment spans residues 430 to 450 (WVDDAFWSFLFSLILIVIMFL). The Cytoplasmic portion of the chain corresponds to 451–555 (WRPSANNQRY…EKMFSSEKIM (105 aa)). Residues S469, S494, S496, and S534 each carry the phosphoserine modification.

The protein belongs to the LU7TM family. TMEM87 subfamily.

Its subcellular location is the golgi apparatus membrane. Functionally, may be involved in retrograde transport from endosomes to the trans-Golgi network (TGN). The polypeptide is Transmembrane protein 87B (Homo sapiens (Human)).